The sequence spans 571 residues: Proline--tRNA ligase (571 aa).

Belongs to the class-II aminoacyl-tRNA synthetase family. ProS type 1 subfamily. As to quaternary structure, homodimer.

It is found in the cytoplasm. It catalyses the reaction tRNA(Pro) + L-proline + ATP = L-prolyl-tRNA(Pro) + AMP + diphosphate. Catalyzes the attachment of proline to tRNA(Pro) in a two-step reaction: proline is first activated by ATP to form Pro-AMP and then transferred to the acceptor end of tRNA(Pro). As ProRS can inadvertently accommodate and process non-cognate amino acids such as alanine and cysteine, to avoid such errors it has two additional distinct editing activities against alanine. One activity is designated as 'pretransfer' editing and involves the tRNA(Pro)-independent hydrolysis of activated Ala-AMP. The other activity is designated 'posttransfer' editing and involves deacylation of mischarged Ala-tRNA(Pro). The misacylated Cys-tRNA(Pro) is not edited by ProRS. The protein is Proline--tRNA ligase of Aliivibrio salmonicida (strain LFI1238) (Vibrio salmonicida (strain LFI1238)).